We begin with the raw amino-acid sequence, 392 residues long: S-adenosylmethionine synthase (392 aa).

An ATP-binding site is contributed by histidine 20. Mg(2+) is bound at residue aspartate 22. Residue glutamate 48 coordinates K(+). L-methionine contacts are provided by glutamate 61 and glutamine 106. Positions 106–116 (QSQDIINAIKK) are flexible loop. ATP-binding positions include 171–173 (DSK), aspartate 248, 254–255 (RK), alanine 271, and lysine 275. Aspartate 248 is an L-methionine binding site. Lysine 279 lines the L-methionine pocket.

It belongs to the AdoMet synthase family. Homotetramer; dimer of dimers. Mg(2+) serves as cofactor. It depends on K(+) as a cofactor.

The protein resides in the cytoplasm. It carries out the reaction L-methionine + ATP + H2O = S-adenosyl-L-methionine + phosphate + diphosphate. It functions in the pathway amino-acid biosynthesis; S-adenosyl-L-methionine biosynthesis; S-adenosyl-L-methionine from L-methionine: step 1/1. Catalyzes the formation of S-adenosylmethionine (AdoMet) from methionine and ATP. The overall synthetic reaction is composed of two sequential steps, AdoMet formation and the subsequent tripolyphosphate hydrolysis which occurs prior to release of AdoMet from the enzyme. This Borrelia garinii subsp. bavariensis (strain ATCC BAA-2496 / DSM 23469 / PBi) (Borreliella bavariensis) protein is S-adenosylmethionine synthase.